Consider the following 448-residue polypeptide: Methylenetetrahydrofolate--tRNA-(uracil-5-)-methyltransferase TrmFO (448 aa).

An FAD-binding site is contributed by 10-15; the sequence is GAGLAG.

This sequence belongs to the MnmG family. TrmFO subfamily. It depends on FAD as a cofactor.

Its subcellular location is the cytoplasm. The enzyme catalyses uridine(54) in tRNA + (6R)-5,10-methylene-5,6,7,8-tetrahydrofolate + NADH + H(+) = 5-methyluridine(54) in tRNA + (6S)-5,6,7,8-tetrahydrofolate + NAD(+). The catalysed reaction is uridine(54) in tRNA + (6R)-5,10-methylene-5,6,7,8-tetrahydrofolate + NADPH + H(+) = 5-methyluridine(54) in tRNA + (6S)-5,6,7,8-tetrahydrofolate + NADP(+). In terms of biological role, catalyzes the folate-dependent formation of 5-methyl-uridine at position 54 (M-5-U54) in all tRNAs. The chain is Methylenetetrahydrofolate--tRNA-(uracil-5-)-methyltransferase TrmFO from Lactococcus lactis subsp. cremoris (strain SK11).